Here is a 353-residue protein sequence, read N- to C-terminus: Adenine deaminase (353 aa).

Residues His-19, His-21, and His-208 each coordinate Zn(2+). Residue Glu-211 is the Proton donor of the active site. Asp-289 is a Zn(2+) binding site. Asp-290 provides a ligand contact to substrate.

This sequence belongs to the metallo-dependent hydrolases superfamily. Adenosine and AMP deaminases family. Adenine deaminase type 2 subfamily. The cofactor is Zn(2+).

The protein localises to the cytoplasm. It localises to the nucleus. The enzyme catalyses adenine + H2O + H(+) = hypoxanthine + NH4(+). Catalyzes the hydrolytic deamination of adenine to hypoxanthine. Plays an important role in the purine salvage pathway and in nitrogen catabolism. The polypeptide is Adenine deaminase (Gibberella zeae (strain ATCC MYA-4620 / CBS 123657 / FGSC 9075 / NRRL 31084 / PH-1) (Wheat head blight fungus)).